We begin with the raw amino-acid sequence, 206 residues long: Small ribosomal subunit protein eS1 (206 aa).

It belongs to the eukaryotic ribosomal protein eS1 family.

This is Small ribosomal subunit protein eS1 from Natronomonas pharaonis (strain ATCC 35678 / DSM 2160 / CIP 103997 / JCM 8858 / NBRC 14720 / NCIMB 2260 / Gabara) (Halobacterium pharaonis).